The following is a 494-amino-acid chain: PIGF/3-ketodihydrosphingosine reductase fusion protein (494 aa).

Gly20, Ser22, and Gly24 together coordinate NADPH. Positions 20 to 24 (GGSQG) match the GXSXG motif. Leu25 is an NADP(+) binding site. 2 residues coordinate NADPH: Arg45 and Lys49. Val54 serves as a coordination point for NADP(+). Positions 74 and 75 each coordinate NADPH. The chain crosses the membrane as a helical span at residues 148–168 (ILLVGSLLSSLPIIGYSAYSP). NADP(+) contacts are provided by Tyr166, Lys170, and Ile199. Tyr166 acts as the Proton acceptor in catalysis. Lys170 acts as the Lowers pKa of active site Tyr in catalysis. Helical transmembrane passes span 264–284 (HDNPILEYLFALVSLLAWPFY), 312–332 (IFTLLLTFTQLTIFYLSLNCL), 370–390 (LAGAASMLIGSLLISFILVAF), 402–422 (YFCALTLSVFTVYPLASTLAF), 444–464 (LRSWGPIIGAWFGAFPIPLDW), and 473–493 (ITIVIGAFLGYAFAAIVGEIL).

The protein in the N-terminal section; belongs to the short-chain dehydrogenases/reductases (SDR) family. This sequence in the C-terminal section; belongs to the PIGF family.

It is found in the endoplasmic reticulum membrane. The enzyme catalyses sphinganine + NADP(+) = 3-oxosphinganine + NADPH + H(+). It functions in the pathway glycolipid biosynthesis; glycosylphosphatidylinositol-anchor biosynthesis. The protein operates within lipid metabolism; sphingolipid metabolism. Functionally, acts in the GPI biosynthetic pathway between GlcNAc-PI synthesis and GPI transfer to protein. Required for the formation of complete GPI precursors CP1 and CP2. Its function is as follows. Catalyzes the reduction of 3'-oxosphinganine (3-ketodihydrosphingosine/KDS) to sphinganine (dihydrosphingosine/DHS), the second step of de novo sphingolipid biosynthesis. The chain is PIGF/3-ketodihydrosphingosine reductase fusion protein from Schizosaccharomyces pombe (strain 972 / ATCC 24843) (Fission yeast).